A 311-amino-acid chain; its full sequence is Ribosomal protein L11 methyltransferase (311 aa).

S-adenosyl-L-methionine contacts are provided by threonine 162, glycine 183, aspartate 205, and asparagine 248.

The protein belongs to the methyltransferase superfamily. PrmA family.

The protein resides in the cytoplasm. It catalyses the reaction L-lysyl-[protein] + 3 S-adenosyl-L-methionine = N(6),N(6),N(6)-trimethyl-L-lysyl-[protein] + 3 S-adenosyl-L-homocysteine + 3 H(+). In terms of biological role, methylates ribosomal protein L11. This is Ribosomal protein L11 methyltransferase from Bacillus licheniformis (strain ATCC 14580 / DSM 13 / JCM 2505 / CCUG 7422 / NBRC 12200 / NCIMB 9375 / NCTC 10341 / NRRL NRS-1264 / Gibson 46).